Reading from the N-terminus, the 874-residue chain is Ectonucleotide pyrophosphatase/phosphodiesterase family member 3 (874 aa).

The Cytoplasmic portion of the chain corresponds to 1-11 (MDSRLALATEE). The chain crosses the membrane as a helical; Signal-anchor for type II membrane protein span at residues 12-30 (PIKKDSLKKYKILCVVLLA). Residues 31 to 874 (LLVIVSLGLG…TYLPTFETII (844 aa)) are Extracellular-facing. 2 SMB domains span residues 51 to 93 (QGSC…VKST) and 94 to 138 (QIWT…GESP). 13 disulfides stabilise this stretch: Cys-54–Cys-58, Cys-54–Cys-71, Cys-58–Cys-89, Cys-69–Cys-71, Cys-69–Cys-82, Cys-75–Cys-81, Cys-82–Cys-89, Cys-98–Cys-115, Cys-103–Cys-133, Cys-113–Cys-126, Cys-119–Cys-125, Cys-144–Cys-190, and Cys-152–Cys-364. A Cell attachment site motif is present at residues 78 to 80 (RGD). The segment at 160 to 544 (PVILFSMDGF…HGSLNHLLKT (385 aa)) is phosphodiesterase. Asp-167 is a binding site for Zn(2+). Lys-204 contributes to the ATP binding site. Thr-205 provides a ligand contact to Zn(2+). The Nucleophile role is filled by Thr-205. Asn-226 serves as a coordination point for ATP. N-linked (GlcNAc...) asparagine glycosylation occurs at Asn-236. Asp-275 contacts ATP. N-linked (GlcNAc...) asparagine glycans are attached at residues Asn-279 and Asn-288. Tyr-289 provides a ligand contact to ATP. Asp-325, His-329, Asp-372, and His-373 together coordinate Zn(2+). Cystine bridges form between Cys-380/Cys-477, Cys-428/Cys-817, Cys-561/Cys-623, Cys-574/Cys-679, Cys-576/Cys-664, and Cys-786/Cys-796. A glycan (N-linked (GlcNAc...) asparagine) is linked at Asn-425. Residue His-482 participates in Zn(2+) binding. N-linked (GlcNAc...) asparagine glycans are attached at residues Asn-532, Asn-594, Asn-687, and Asn-701. The interval 581-874 (NTPGLEEQAN…TYLPTFETII (294 aa)) is nuclease. Ca(2+)-binding residues include Asp-751, Asn-753, Asp-755, His-757, and Asp-759. An N-linked (GlcNAc...) asparagine glycan is attached at Asn-820.

In terms of assembly, monomer and homodimer. Zn(2+) serves as cofactor. In terms of processing, N-glycosylated. N-glycosylation is necessary for normal transport to the cell membrane, but is not the apical targeting signal. Detected at the tip of villi in the small intestine. Detected on basophils and mast cells (at protein level). Detected in the epithelial layer of the small intestine; expression is higher in the proximal part and lower in the distal part of the small intestine.

The protein localises to the cell membrane. It localises to the apical cell membrane. The protein resides in the secreted. It carries out the reaction a ribonucleoside 5'-triphosphate + H2O = a ribonucleoside 5'-phosphate + diphosphate + H(+). The enzyme catalyses UDP-N-acetyl-alpha-D-glucosamine + H2O = N-acetyl-alpha-D-glucosamine 1-phosphate + UMP + 2 H(+). The catalysed reaction is ATP + H2O = AMP + diphosphate + H(+). It catalyses the reaction CTP + H2O = CMP + diphosphate + H(+). It carries out the reaction GTP + H2O = GMP + diphosphate + H(+). The enzyme catalyses UTP + H2O = UMP + diphosphate + H(+). The catalysed reaction is Hydrolytically removes 5'-nucleotides successively from the 3'-hydroxy termini of 3'-hydroxy-terminated oligonucleotides.. It catalyses the reaction P(1),P(3)-bis(5'-adenosyl) triphosphate + H2O = AMP + ADP + 2 H(+). It carries out the reaction P(1),P(4)-bis(5'-adenosyl) tetraphosphate + H2O = AMP + ATP + 2 H(+). The enzyme catalyses P(1),P(5)-bis(5'-adenosyl) pentaphosphate + H2O = adenosine 5'-tetraphosphate + AMP + 2 H(+). The catalysed reaction is P(1),P(4)-bis(5'-guanosyl) tetraphosphate + H2O = GMP + GTP + 2 H(+). Hydrolase that metabolizes extracellular nucleotides, including ATP, GTP, UTP and CTP. Limits mast cells and basophils response during inflammation and during the chronic phases of allergic responses by eliminating extracellular ATP, a signaling molecule activating these cells in an autocrine manner. Metabolizes extracellular ATP in the lumen of the small intestine, and thereby prevents ATP-induced apoptosis of intestinal plasmacytoid dendritic cells. Has a broad specificity and can also hydrolyze UDP-GlcNAc into UMP and GlcNAc-1-phosphate and potentially several other intracellular nucleotide sugars, including UDP-GalNAc, CMP-NeuAc, GDP-Fuc, and UDP-GlcA. Thereby, could modulate glycan biosynthesis and protein glycosylation. Can hydrolyze extracellular dinucleoside polyphosphates, including the vasoactive adenosine polyphosphates as well. In addition, displays an alkaline phosphodiesterase activity in vitro. This is Ectonucleotide pyrophosphatase/phosphodiesterase family member 3 from Mus musculus (Mouse).